Reading from the N-terminus, the 302-residue chain is Ornithine carbamoyltransferase (302 aa).

Carbamoyl phosphate contacts are provided by residues 52-55, Gln-79, Arg-103, and 130-133; these read STRT and HPCQ. Residues Asn-161, Asp-222, and 226-227 each bind L-ornithine; that span reads SM. Carbamoyl phosphate contacts are provided by residues 262–263 and Arg-290; that span reads CL.

The protein belongs to the aspartate/ornithine carbamoyltransferase superfamily. OTCase family.

The protein resides in the cytoplasm. It catalyses the reaction carbamoyl phosphate + L-ornithine = L-citrulline + phosphate + H(+). It participates in amino-acid biosynthesis; L-arginine biosynthesis; L-arginine from L-ornithine and carbamoyl phosphate: step 1/3. In terms of biological role, reversibly catalyzes the transfer of the carbamoyl group from carbamoyl phosphate (CP) to the N(epsilon) atom of ornithine (ORN) to produce L-citrulline. The sequence is that of Ornithine carbamoyltransferase from Syntrophus aciditrophicus (strain SB).